The following is a 954-amino-acid chain: Centrosomal protein of 112 kDa (954 aa).

Positions 276–954 (QKHDAEVQKI…EELTTYQSRR (679 aa)) form a coiled coil.

The protein resides in the cytoplasm. The protein localises to the cytoskeleton. It localises to the microtubule organizing center. Its subcellular location is the centrosome. The protein is Centrosomal protein of 112 kDa (Cep112) of Mus musculus (Mouse).